The sequence spans 159 residues: Transcription elongation factor A protein-like 1 (159 aa).

The segment at 1-97 is disordered; that stretch reads MDKPRKENEE…PPCGVGKHKL (97 aa). Residues 17-34 show a composition bias toward basic and acidic residues; that stretch reads KTDEERPPVEHSPEKQSP. A phosphoserine mark is found at serine 28, serine 33, serine 38, serine 39, serine 43, and serine 44. Over residues 37–54 the composition is skewed to acidic residues; the sequence is QSSEEQSSEEEFFPEELL. Residues 64–80 are compositionally biased toward basic and acidic residues; the sequence is SEERPPQEGLSRKDLFE.

It belongs to the TFS-II family. TFA subfamily. Phosphorylation of Ser-38 and Ser-39 is critical for transcriptional repression. As to expression, expressed in all tissues examined. Highly expressed in heart, ovary, prostate and skeletal muscle. Moderately expressed in brain, placenta, testis and small intestine. Weakly expressed in lung, liver and spleen. Expressed in several cancer cell lines.

It localises to the nucleus. Its function is as follows. May be involved in transcriptional regulation. Modulates various viral and cellular promoters in a promoter context-dependent manner. For example, transcription from the FOS promoter is increased, while Rous sarcoma virus (RSV) long terminal repeat (LTR) promoter activity is repressed. Does not bind DNA directly. The polypeptide is Transcription elongation factor A protein-like 1 (Homo sapiens (Human)).